We begin with the raw amino-acid sequence, 55 residues long: Myrmicitoxin(1)-Pr6b (55 aa).

An N-terminal signal peptide occupies residues 1–22 (MKIIYAFLLIAVVAFMGSGIMA). The propeptide occupies 23-29 (ESLAEAI).

This sequence belongs to the formicidae venom clade 4 family. As to expression, expressed by the venom gland.

It is found in the secreted. Functionally, probable neurotoxin. In Pogonomyrmex rugosus (Desert harvester ant), this protein is Myrmicitoxin(1)-Pr6b.